A 364-amino-acid chain; its full sequence is MSKKMNSTPKKDGFWMPGEWEKHDQCWMIWPERSDNWRLGAKPAQRVFANVANAIAKYEKVTMLVSHQQFENARNLLDQNVRVIECSNDDSWMRDVGPTIVKNKDGEIRGVDWVFNAWGGFKGGLYFPWDKDDAIARKVCEISNIDYYRTDFVLEGGSIHTDGDGTLYTTEECLLNENRNPDLSKEQIEENLKEYCGVEKVIWLPLGVYNDETNGHVDNLLHVVSPGHVVLTWTDDTTDPQYERSKLAYDILTNTLDAKGRKIKVTKLHQPGPLFITKEEAEGIDVCDTMSREPEQRMPASYANFYIANNAIILPIFGDKYDDLAVKTLQSVYPNHKIETVMAREILLGGGNIHCITQQQPTTK.

Cys-355 functions as the Amidino-cysteine intermediate in the catalytic mechanism.

Belongs to the agmatine deiminase family.

The catalysed reaction is agmatine + H2O = N-carbamoylputrescine + NH4(+). The chain is Putative agmatine deiminase from Mycoplasma capricolum subsp. capricolum (strain California kid / ATCC 27343 / NCTC 10154).